Reading from the N-terminus, the 300-residue chain is Tyrosine recombinase XerC (300 aa).

The Core-binding (CB) domain occupies 2-87; the sequence is TSLSPLLEKF…SIKSFYKYLV (86 aa). One can recognise a Tyr recombinase domain in the interval 108–294; the sequence is TLPKVLPVEE…TWEQLQQVYD (187 aa). Residues R148, K172, H246, R249, and H272 contribute to the active site. The active-site O-(3'-phospho-DNA)-tyrosine intermediate is Y281.

This sequence belongs to the 'phage' integrase family. XerC subfamily. Forms a cyclic heterotetrameric complex composed of two molecules of XerC and two molecules of XerD.

It localises to the cytoplasm. Its function is as follows. Site-specific tyrosine recombinase, which acts by catalyzing the cutting and rejoining of the recombining DNA molecules. The XerC-XerD complex is essential to convert dimers of the bacterial chromosome into monomers to permit their segregation at cell division. It also contributes to the segregational stability of plasmids. The chain is Tyrosine recombinase XerC from Myxococcus xanthus.